We begin with the raw amino-acid sequence, 72 residues long: Cytochrome b-c1 complex subunit 9 (72 aa).

Over 1–27 the chain is Mitochondrial matrix; it reads MESAARRSGGGVLEGFYRLVMRRTPVY. A helical transmembrane segment spans residues 28 to 53; the sequence is VTFVIAGALLGERAVDYGVKTLWEKN. The Mitochondrial intermembrane portion of the chain corresponds to 54–72; the sequence is NVGKRYEDISVLGQRPVDE.

The protein belongs to the UQCR10/QCR9 family. In terms of assembly, component of the ubiquinol-cytochrome c oxidoreductase (cytochrome b-c1 complex, complex III, CIII), a multisubunit enzyme composed of 3 respiratory subunits cytochrome b, cytochrome c1 and Rieske protein, 2 core protein subunits, and additional low-molecular weight protein subunits. The complex exists as an obligatory dimer and forms supercomplexes (SCs) in the inner mitochondrial membrane with cytochrome c oxidase (complex IV, CIV).

It localises to the mitochondrion inner membrane. Component of the ubiquinol-cytochrome c oxidoreductase, a multisubunit transmembrane complex that is part of the mitochondrial electron transport chain which drives oxidative phosphorylation. The respiratory chain contains 3 multisubunit complexes succinate dehydrogenase (complex II, CII), ubiquinol-cytochrome c oxidoreductase (cytochrome b-c1 complex, complex III, CIII) and cytochrome c oxidase (complex IV, CIV), that cooperate to transfer electrons derived from NADH and succinate to molecular oxygen, creating an electrochemical gradient over the inner membrane that drives transmembrane transport and the ATP synthase. The cytochrome b-c1 complex catalyzes electron transfer from ubiquinol to cytochrome c, linking this redox reaction to translocation of protons across the mitochondrial inner membrane, with protons being carried across the membrane as hydrogens on the quinol. In the process called Q cycle, 2 protons are consumed from the matrix, 4 protons are released into the intermembrane space and 2 electrons are passed to cytochrome c. This chain is Cytochrome b-c1 complex subunit 9, found in Solanum tuberosum (Potato).